The following is a 297-amino-acid chain: Guanylate kinase (297 aa).

One can recognise a Guanylate kinase-like domain in the interval 4-183 (GKMIIISGPS…AVAKITDVLH (180 aa)). Position 11–18 (11–18 (GPSGVGKG)) interacts with ATP. A unknown region spans residues 204-297 (EQIVKEKYMY…EQKHYNNDEF (94 aa)).

This sequence belongs to the guanylate kinase family.

The protein localises to the cytoplasm. The enzyme catalyses GMP + ATP = GDP + ADP. In terms of biological role, essential for recycling GMP and indirectly, cGMP. The polypeptide is Guanylate kinase (gmk) (Mycoplasma capricolum subsp. capricolum (strain California kid / ATCC 27343 / NCTC 10154)).